Reading from the N-terminus, the 356-residue chain is Alanine racemase, catabolic (356 aa).

Lys35 functions as the Proton acceptor; specific for D-alanine in the catalytic mechanism. Lys35 bears the N6-(pyridoxal phosphate)lysine mark. Position 130 (Arg130) interacts with substrate. The active-site Proton acceptor; specific for L-alanine is Tyr253. A substrate-binding site is contributed by Met301.

It belongs to the alanine racemase family. It depends on pyridoxal 5'-phosphate as a cofactor.

The enzyme catalyses L-alanine = D-alanine. In terms of biological role, isomerizes L-alanine to D-alanine which is then oxidized to pyruvate by DadA. This is Alanine racemase, catabolic (dadB) from Klebsiella aerogenes (Enterobacter aerogenes).